The following is a 345-amino-acid chain: uncharacterized protein (345 aa).

A CNNM transmembrane domain is found at 1 to 198 (MDVLSAVLLA…LSEGLLDHEE (198 aa)). A run of 2 helical transmembrane segments spans residues 3 to 23 (VLSA…FVGA) and 95 to 115 (VPPA…HVLL). 2 consecutive CBS domains span residues 217–280 (AVPL…PQTV) and 285–342 (VVRP…MRDG). The chain crosses the membrane as a helical span at residues 312-332 (LALVTADNGSVVGMVALEDVV).

This sequence belongs to the TerC family.

It localises to the cell membrane. This is an uncharacterized protein from Mycobacterium tuberculosis (strain CDC 1551 / Oshkosh).